Here is a 135-residue protein sequence, read N- to C-terminus: MWAYIFGAVCPRKGKGAGLVLPYCDTEAMQEHLAEIGRSVDDGAHAVLILDQAGWHVTPKLKVPDNITLMFLPPRSPELNPVENVWQFMRDNWLSNRIFKDYDDIVTHCCAAWNKLVDQPWKIMSIGLREWAHRS.

This is an uncharacterized protein from Sinorhizobium fredii (strain NBRC 101917 / NGR234).